Reading from the N-terminus, the 88-residue chain is Augerpeptide Hhe9a (88 aa).

Positions 1 to 21 (MMTKTGLVLLFAFLLVFPVSS) are cleaved as a signal peptide. Positions 22–49 (LPMDAEAGHARLEMDKRDAGNEAWTRLL) are excised as a propeptide. Cystine bridges form between cysteine 56–cysteine 71, cysteine 61–cysteine 73, and cysteine 67–cysteine 86.

In terms of tissue distribution, expressed by the venom duct.

The protein resides in the secreted. The protein is Augerpeptide Hhe9a of Hastula hectica (Sea snail).